A 168-amino-acid polypeptide reads, in one-letter code: Peptide deformylase (168 aa).

2 residues coordinate Fe cation: C92 and H134. Residue E135 is part of the active site. Position 138 (H138) interacts with Fe cation.

Belongs to the polypeptide deformylase family. It depends on Fe(2+) as a cofactor.

The enzyme catalyses N-terminal N-formyl-L-methionyl-[peptide] + H2O = N-terminal L-methionyl-[peptide] + formate. Functionally, removes the formyl group from the N-terminal Met of newly synthesized proteins. Requires at least a dipeptide for an efficient rate of reaction. N-terminal L-methionine is a prerequisite for activity but the enzyme has broad specificity at other positions. The polypeptide is Peptide deformylase (Pseudomonas aeruginosa (strain ATCC 15692 / DSM 22644 / CIP 104116 / JCM 14847 / LMG 12228 / 1C / PRS 101 / PAO1)).